The sequence spans 447 residues: Argininosuccinate synthase (447 aa).

Residues 17 to 25 (AFSGGLDTS) and Ala43 each bind ATP. Residue Tyr99 participates in L-citrulline binding. ATP-binding residues include Gly129 and Thr131. Thr131, Asn135, and Asp136 together coordinate L-aspartate. Asn135 is a binding site for L-citrulline. Asp136 contributes to the ATP binding site. L-citrulline contacts are provided by Arg139 and Ser192. An ATP-binding site is contributed by Asp194. The L-citrulline site is built by Thr201, Glu203, and Glu280.

It belongs to the argininosuccinate synthase family. Type 2 subfamily. In terms of assembly, homotetramer.

It localises to the cytoplasm. The catalysed reaction is L-citrulline + L-aspartate + ATP = 2-(N(omega)-L-arginino)succinate + AMP + diphosphate + H(+). Its pathway is amino-acid biosynthesis; L-arginine biosynthesis; L-arginine from L-ornithine and carbamoyl phosphate: step 2/3. This chain is Argininosuccinate synthase, found in Escherichia coli O139:H28 (strain E24377A / ETEC).